We begin with the raw amino-acid sequence, 220 residues long: N-(5'-phosphoribosyl)anthranilate isomerase (220 aa).

It belongs to the TrpF family.

It carries out the reaction N-(5-phospho-beta-D-ribosyl)anthranilate = 1-(2-carboxyphenylamino)-1-deoxy-D-ribulose 5-phosphate. It participates in amino-acid biosynthesis; L-tryptophan biosynthesis; L-tryptophan from chorismate: step 3/5. The protein is N-(5'-phosphoribosyl)anthranilate isomerase of Gloeothece citriformis (strain PCC 7424) (Cyanothece sp. (strain PCC 7424)).